The chain runs to 158 residues: Small ribosomal subunit protein uS9 (158 aa).

This sequence belongs to the universal ribosomal protein uS9 family.

The sequence is that of Small ribosomal subunit protein uS9 from Rhodopseudomonas palustris (strain BisA53).